Here is a 3411-residue protein sequence, read N- to C-terminus: Genome polyprotein (3411 aa).

Over 1–104 (MSGRKAQGKT…LSSRKRRSHD (104 aa)) the chain is Cytoplasmic. Residues 102-121 (SHDALAVQFLILGMLLMAGG) constitute a propeptide, ER anchor for the capsid protein C, removed in mature form by serine protease NS3. A helical transmembrane segment spans residues 105 to 125 (ALAVQFLILGMLLMAGGVTLV). Topologically, residues 126 to 244 (RKNRWLLLNV…GERQLQKIER (119 aa)) are extracellular. N-linked (GlcNAc...) asparagine; by host glycosylation is found at Asn-134 and Asn-150. Residues 245 to 265 (WLVRNPFFAVTALTIAYLVGS) traverse the membrane as a helical segment. Residues 266-270 (NMTQR) are Cytoplasmic-facing. The helical transmembrane segment at 271–285 (VVIALLVLAVGPAYS) threads the bilayer. Residues 286 to 730 (AHCIGITDRD…TVFGSAFQGL (445 aa)) are Extracellular-facing. 8 cysteine pairs are disulfide-bonded: Cys-288–Cys-315, Cys-345–Cys-401, Cys-345–Cys-406, Cys-359–Cys-390, Cys-377–Cys-401, Cys-377–Cys-406, Cys-467–Cys-568, and Cys-585–Cys-615. The interval 383–396 (DRGWGNGCGLFGKG) is fusion peptide. The chain crosses the membrane as a helical span at residues 731-751 (FGGLSWITKVIMGAVLIWVGI). Residues 752–757 (NTRNMT) are Extracellular-facing. The chain crosses the membrane as a helical span at residues 758–778 (MSMSMILVGVIMMFLSLGVGA). Over 779-1132 (DQGCAINFGK…LVRSWVTAGE (354 aa)) the chain is Extracellular. Disulfide bonds link Cys-782-Cys-793, Cys-833-Cys-921, Cys-957-Cys-1002, Cys-1058-Cys-1107, Cys-1069-Cys-1091, and Cys-1090-Cys-1094. 2 N-linked (GlcNAc...) asparagine; by host glycosylation sites follow: Asn-908 and Asn-986. The helical transmembrane segment at 1133–1153 (IHAVPFGLVSMMIAMEVVLRK) threads the bilayer. Residues 1154 to 1201 (RQGPKQMLVGGVVLLGAMLVGQVTLLDLLKLTVAVGLHFHEMNNGGDA) lie on the Cytoplasmic side of the membrane. The chain crosses the membrane as a helical span at residues 1202–1222 (MYMALIAAFSIRPGLLIGFGL). Residues 1223 to 1287 (RTLWSPRERL…ILPLMALLTP (65 aa)) are Lumenal-facing. The helical transmembrane segment at 1288–1308 (VTMAEVRLAAMLFCTVVIIGV) threads the bilayer. Residues 1309 to 1355 (LHQNSKDTSMQKTIPLVALTLTSYLGLTQPFLGLCAFLATRLFGRRS) are Cytoplasmic-facing. A helical transmembrane segment spans residues 1356–1376 (IPVNEALAAAGLVGVLAGLAF). At 1377–1378 (QE) the chain is on the lumenal side. The chain crosses the membrane as a helical span at residues 1379–1399 (MENFLGPIAVGGILMMLVSVA). Topologically, residues 1400–1456 (GRVDGLELRKLGEVSWEEEAEISGSSARYDVALSEQGEFKLLSEEKVPWDQVVMTSL) are cytoplasmic. The segment at 1407–1446 (LRKLGEVSWEEEAEISGSSARYDVALSEQGEFKLLSEEKV) is interacts with and activates NS3 protease. Residues 1457-1477 (ALVGAAIHPFALLLVLAGWLF) constitute an intramembrane region (helical). The Cytoplasmic portion of the chain corresponds to 1478 to 2157 (HVKGARRSGD…RNALSMMPEA (680 aa)). Residues 1485 to 1665 (SGDVLWDIPT…EVKEEGKEEL (181 aa)) enclose the Peptidase S7 domain. Catalysis depends on charge relay system; for serine protease NS3 activity residues His-1537, Asp-1561, and Ser-1622. In terms of domain architecture, Helicase ATP-binding spans 1669-1825 (PTMLKKGMTT…HSNGEIEDVQ (157 aa)). An important for RNA-binding region spans residues 1673 to 1676 (KKGM). 1682 to 1689 (FHPGAGKT) is an ATP binding site. Positions 1773-1776 (DEAH) match the DEAH box motif. The 178-residue stretch at 1820-1997 (EIEDVQTDIP…VRGGMVAPLY (178 aa)) folds into the Helicase C-terminal domain. Position 1877 is an N6-acetyllysine; by host (Lys-1877). Positions 1942 to 1961 (AAQRRGRIGRNPNRDGDSYY) are disordered. Residues 2158–2178 (MTIAMLFILAGLLTSGMVIFF) form a helical membrane-spanning segment. The Lumenal segment spans residues 2179–2186 (MSPKGISR). The helical intramembrane region spans 2187–2207 (MSMAMGTMAGCGYLMFLGGVK). The Lumenal portion of the chain corresponds to 2208–2209 (PT). A helical transmembrane segment spans residues 2210–2230 (HISYIMLIFFVLMVVVIPEPG). Residues 2231–2241 (QQRSIQDNQVA) lie on the Cytoplasmic side of the membrane. Residues 2242-2262 (YLIIGILTLVSVVAANELGML) traverse the membrane as a helical segment. Residues 2263 to 2293 (EKTKEDLFGKKDLIPSSASPWSWPDLDLKPG) are Lumenal-facing. The helical intramembrane region spans 2294–2314 (AAWTVYVGIVTMLSPMLHHWI). Topologically, residues 2315-2360 (KVEYGNLSLSGIAQSASVLSFMDKGIPFMKMNISVIILLVSGWNSI) are lumenal. Residues 2361–2380 (TVMPLLCGIGCAMLHWSLIL) traverse the membrane as a helical segment. Residues 2381 to 2421 (PGIKAQQSKLAQRRVFHGVAKNPVVDGNPTVDIEEAPEMPA) lie on the Cytoplasmic side of the membrane. The chain crosses the membrane as a helical span at residues 2422–2442 (LYEKKLALYLLLALSLASVAM). Residues 2443–2445 (CRT) lie on the Lumenal side of the membrane. A helical transmembrane segment spans residues 2446–2466 (PFSLAEGIVLASAALGPLIEG). Topologically, residues 2467–3411 (NTSLLWNGPM…DADLQPGELI (945 aa)) are cytoplasmic. The mRNA cap 0-1 NS5-type MT domain occupies 2507–2771 (GRANGKTLGE…DVILPIGTRS (265 aa)). Position 2562 (Ser-2562) interacts with S-adenosyl-L-methionine. Ser-2562 carries the phosphoserine modification. Residue Lys-2567 is the For 2'-O-MTase activity of the active site. The S-adenosyl-L-methionine site is built by Gly-2592, Trp-2593, Thr-2610, Leu-2611, Asp-2637, and Ile-2638. The active-site For 2'-O-MTase activity is Asp-2652. Ile-2653 is an S-adenosyl-L-methionine binding site. Residues Lys-2688 and Glu-2724 each act as for 2'-O-MTase activity in the active site. Residue Tyr-2726 coordinates S-adenosyl-L-methionine. A Nuclear localization signal motif is present at residues 2878-2911 (RKIMKVVNRWLFRHLAREKNPRLCTKEEFIAKVR). Zn(2+) contacts are provided by Glu-2945, His-2949, Cys-2954, and Cys-2957. The region spanning 3035–3187 (GGFYADDTAG…RPIDDRFGLA (153 aa)) is the RdRp catalytic domain. Residues His-3222, Cys-3238, and Cys-3357 each contribute to the Zn(2+) site.

The protein in the N-terminal section; belongs to the class I-like SAM-binding methyltransferase superfamily. mRNA cap 0-1 NS5-type methyltransferase family. Homodimer. Interacts (via N-terminus) with host EXOC1 (via C-terminus); this interaction results in EXOC1 degradation through the proteasome degradation pathway. As to quaternary structure, forms heterodimers with envelope protein E in the endoplasmic reticulum and Golgi. In terms of assembly, homodimer; in the endoplasmic reticulum and Golgi. Interacts with protein prM. Interacts with non-structural protein 1. Homodimer; Homohexamer when secreted. Interacts with envelope protein E. As to quaternary structure, interacts (via N-terminus) with serine protease NS3. In terms of assembly, forms a heterodimer with serine protease NS3. May form homooligomers. Forms a heterodimer with NS2B. Interacts with non-structural protein 2A (via N-terminus). Interacts with NS4B. Interacts with unphosphorylated RNA-directed RNA polymerase NS5; this interaction stimulates RNA-directed RNA polymerase NS5 guanylyltransferase activity. NS3 interacts with host PDCD6IP; this interaction contributes to virion release. As to quaternary structure, interacts with serine protease NS3. In terms of assembly, homodimer. Interacts with host STAT2; this interaction prevents the establishment of cellular antiviral state. Interacts with serine protease NS3. Interacts with host TRIM23; this interaction leads to NS5 ubiquitination. In terms of processing, specific enzymatic cleavages in vivo yield mature proteins. The nascent capsid protein C contains a C-terminal hydrophobic domain that act as a signal sequence for translocation of prM into the lumen of the ER. Mature capsid protein C is cleaved at a site upstream of this hydrophobic domain by NS3. prM is cleaved in post-Golgi vesicles by a host furin, releasing the mature small envelope protein M, and peptide pr. Non-structural protein 2A-alpha, a C-terminally truncated form of non-structural protein 2A, results from partial cleavage by NS3. Specific enzymatic cleavages in vivo yield mature proteins peptide 2K acts as a signal sequence and is removed from the N-terminus of NS4B by the host signal peptidase in the ER lumen. Signal cleavage at the 2K-4B site requires a prior NS3 protease-mediated cleavage at the 4A-2K site. Cleaved in post-Golgi vesicles by a host furin, releasing the mature small envelope protein M, and peptide pr. This cleavage is incomplete as up to 30% of viral particles still carry uncleaved prM. Post-translationally, N-glycosylated. In terms of processing, N-glycosylated. The excreted form is glycosylated and this is required for efficient secretion of the protein from infected cells. Polyubiquitinated; ubiquitination is probably mediated by host TRIM23 and is prerequisite for NS5-STAT2 interaction. NS5 is not ISGylated or sumoylated. Post-translationally, acetylated by host KAT5. Acetylation modulates NS3 RNA-binding and unwinding activities and plays an important positive role for viral replication. In terms of processing, phosphorylated on serines residues. This phosphorylation may trigger NS5 nuclear localization.

It is found in the virion. The protein localises to the host nucleus. Its subcellular location is the host cytoplasm. It localises to the host perinuclear region. The protein resides in the secreted. It is found in the virion membrane. The protein localises to the host endoplasmic reticulum membrane. It catalyses the reaction Selective hydrolysis of -Xaa-Xaa-|-Yaa- bonds in which each of the Xaa can be either Arg or Lys and Yaa can be either Ser or Ala.. It carries out the reaction RNA(n) + a ribonucleoside 5'-triphosphate = RNA(n+1) + diphosphate. The enzyme catalyses a ribonucleoside 5'-triphosphate + H2O = a ribonucleoside 5'-diphosphate + phosphate + H(+). The catalysed reaction is ATP + H2O = ADP + phosphate + H(+). It catalyses the reaction a 5'-end (5'-triphosphoguanosine)-ribonucleoside in mRNA + S-adenosyl-L-methionine = a 5'-end (N(7)-methyl 5'-triphosphoguanosine)-ribonucleoside in mRNA + S-adenosyl-L-homocysteine. It carries out the reaction a 5'-end (N(7)-methyl 5'-triphosphoguanosine)-ribonucleoside in mRNA + S-adenosyl-L-methionine = a 5'-end (N(7)-methyl 5'-triphosphoguanosine)-(2'-O-methyl-ribonucleoside) in mRNA + S-adenosyl-L-homocysteine + H(+). Plays a role in virus budding by binding to the cell membrane and gathering the viral RNA into a nucleocapsid that forms the core of a mature virus particle. During virus entry, may induce genome penetration into the host cytoplasm after hemifusion induced by the surface proteins. Can migrate to the cell nucleus where it modulates host functions. Functionally, inhibits RNA silencing by interfering with host Dicer. Its function is as follows. Prevents premature fusion activity of envelope proteins in trans-Golgi by binding to envelope protein E at pH6.0. After virion release in extracellular space, gets dissociated from E dimers. In terms of biological role, acts as a chaperone for envelope protein E during intracellular virion assembly by masking and inactivating envelope protein E fusion peptide. prM is the only viral peptide matured by host furin in the trans-Golgi network probably to avoid catastrophic activation of the viral fusion activity in acidic Golgi compartment prior to virion release. prM-E cleavage is inefficient, and many virions are only partially matured. These uncleaved prM would play a role in immune evasion. May play a role in virus budding. Exerts cytotoxic effects by activating a mitochondrial apoptotic pathway through M ectodomain. May display a viroporin activity. Functionally, binds to host cell surface receptor and mediates fusion between viral and cellular membranes. Envelope protein is synthesized in the endoplasmic reticulum in the form of heterodimer with protein prM. They play a role in virion budding in the ER, and the newly formed immature particle is covered with 60 spikes composed of heterodimer between precursor prM and envelope protein E. The virion is transported to the Golgi apparatus where the low pH causes dissociation of PrM-E heterodimers and formation of E homodimers. prM-E cleavage is inefficient, and many virions are only partially matured. These uncleaved prM would play a role in immune evasion. Its function is as follows. Involved in immune evasion, pathogenesis and viral replication. Once cleaved off the polyprotein, is targeted to three destinations: the viral replication cycle, the plasma membrane and the extracellular compartment. Essential for viral replication. Required for formation of the replication complex and recruitment of other non-structural proteins to the ER-derived membrane structures. Excreted as a hexameric lipoparticle that plays a role against host immune response. Antagonizing the complement function. Binds to the host macrophages and dendritic cells. Inhibits signal transduction originating from Toll-like receptor 3 (TLR3). In terms of biological role, component of the viral RNA replication complex that functions in virion assembly and antagonizes the host immune response. Required cofactor for the serine protease function of NS3. May have membrane-destabilizing activity and form viroporins. Functionally, displays three enzymatic activities: serine protease, NTPase and RNA helicase. NS3 serine protease, in association with NS2B, performs its autocleavage and cleaves the polyprotein at dibasic sites in the cytoplasm: C-prM, NS2A-NS2B, NS2B-NS3, NS3-NS4A, NS4A-2K and NS4B-NS5. NS3 RNA helicase binds RNA and unwinds dsRNA in the 3' to 5' direction. Also plays a role in virus assembly. Its function is as follows. Regulates the ATPase activity of the NS3 helicase activity. NS4A allows NS3 helicase to conserve energy during unwinding. In terms of biological role, functions as a signal peptide for NS4B and is required for the interferon antagonism activity of the latter. Induces the formation of ER-derived membrane vesicles where the viral replication takes place. Inhibits interferon (IFN)-induced host STAT1 phosphorylation and nuclear translocation, thereby preventing the establishment of cellular antiviral state by blocking the IFN-alpha/beta pathway. Functionally, replicates the viral (+) and (-) RNA genome, and performs the capping of genomes in the cytoplasm. NS5 methylates viral RNA cap at guanine N-7 and ribose 2'-O positions. Besides its role in RNA genome replication, also prevents the establishment of cellular antiviral state by blocking the interferon-alpha/beta (IFN-alpha/beta) signaling pathway. IFN-I induces binding of NS5 to host IFN-activated transcription factor STAT2, preventing its transcriptional activity. Host TRIM23 is the E3 ligase that interacts with and polyubiquitinates NS5 to promote its binding to STAT2 and trigger IFN-I signaling inhibition. The protein is Genome polyprotein of Yellow fever virus (isolate Ivory Coast/1999) (YFV).